Here is a 491-residue protein sequence, read N- to C-terminus: Glutamyl-tRNA(Gln) amidotransferase subunit A (491 aa).

Active-site charge relay system residues include K80 and S155. S179 acts as the Acyl-ester intermediate in catalysis.

This sequence belongs to the amidase family. GatA subfamily. In terms of assembly, heterotrimer of A, B and C subunits.

It catalyses the reaction L-glutamyl-tRNA(Gln) + L-glutamine + ATP + H2O = L-glutaminyl-tRNA(Gln) + L-glutamate + ADP + phosphate + H(+). Functionally, allows the formation of correctly charged Gln-tRNA(Gln) through the transamidation of misacylated Glu-tRNA(Gln) in organisms which lack glutaminyl-tRNA synthetase. The reaction takes place in the presence of glutamine and ATP through an activated gamma-phospho-Glu-tRNA(Gln). The polypeptide is Glutamyl-tRNA(Gln) amidotransferase subunit A (Salinispora arenicola (strain CNS-205)).